The following is a 188-amino-acid chain: Pyridoxal 5'-phosphate synthase subunit PdxT (188 aa).

46–48 (GES) serves as a coordination point for L-glutamine. Cys78 functions as the Nucleophile in the catalytic mechanism. L-glutamine contacts are provided by residues Arg106 and 132–133 (IR). Residues His169 and Glu171 each act as charge relay system in the active site.

This sequence belongs to the glutaminase PdxT/SNO family. In terms of assembly, in the presence of PdxS, forms a dodecamer of heterodimers. Only shows activity in the heterodimer.

The catalysed reaction is aldehydo-D-ribose 5-phosphate + D-glyceraldehyde 3-phosphate + L-glutamine = pyridoxal 5'-phosphate + L-glutamate + phosphate + 3 H2O + H(+). It catalyses the reaction L-glutamine + H2O = L-glutamate + NH4(+). Its pathway is cofactor biosynthesis; pyridoxal 5'-phosphate biosynthesis. Its function is as follows. Catalyzes the hydrolysis of glutamine to glutamate and ammonia as part of the biosynthesis of pyridoxal 5'-phosphate. The resulting ammonia molecule is channeled to the active site of PdxS. This chain is Pyridoxal 5'-phosphate synthase subunit PdxT, found in Tropheryma whipplei (strain Twist) (Whipple's bacillus).